The primary structure comprises 228 residues: Phosphoglycolate phosphatase (228 aa).

Asp9 functions as the Nucleophile in the catalytic mechanism. Mg(2+)-binding residues include Asp9 and Asp11. Lys151 provides a ligand contact to substrate. Positions 174 and 178 each coordinate Mg(2+).

It belongs to the archaeal SPP-like hydrolase family. The cofactor is Mg(2+).

The catalysed reaction is 2-phosphoglycolate + H2O = glycolate + phosphate. Its function is as follows. Catalyzes the dephosphorylation of 2-phosphoglycolate. This Pyrobaculum neutrophilum (strain DSM 2338 / JCM 9278 / NBRC 100436 / V24Sta) (Thermoproteus neutrophilus) protein is Phosphoglycolate phosphatase.